The following is a 364-amino-acid chain: 3-isopropylmalate dehydrogenase (364 aa).

77-90 (GPKWDNLPTDKRPE) contacts NAD(+). Residues R97, R107, R135, and D224 each coordinate substrate. Positions 224, 248, and 252 each coordinate Mg(2+). 281–293 (GSAPDIAGKGIAN) serves as a coordination point for NAD(+).

It belongs to the isocitrate and isopropylmalate dehydrogenases family. LeuB type 1 subfamily. In terms of assembly, homodimer. The cofactor is Mg(2+). Mn(2+) is required as a cofactor.

Its subcellular location is the cytoplasm. It carries out the reaction (2R,3S)-3-isopropylmalate + NAD(+) = 4-methyl-2-oxopentanoate + CO2 + NADH. It functions in the pathway amino-acid biosynthesis; L-leucine biosynthesis; L-leucine from 3-methyl-2-oxobutanoate: step 3/4. Functionally, catalyzes the oxidation of 3-carboxy-2-hydroxy-4-methylpentanoate (3-isopropylmalate) to 3-carboxy-4-methyl-2-oxopentanoate. The product decarboxylates to 4-methyl-2 oxopentanoate. In Aquifex aeolicus (strain VF5), this protein is 3-isopropylmalate dehydrogenase (leuB).